Consider the following 112-residue polypeptide: UPF0342 protein SPT_0901 (112 aa).

It belongs to the UPF0342 family.

This is UPF0342 protein SPT_0901 from Streptococcus pneumoniae (strain Taiwan19F-14).